Here is a 327-residue protein sequence, read N- to C-terminus: Chain length determinant protein (327 aa).

The Cytoplasmic segment spans residues 1 to 31; it reads MSISDNNMSGRSHDPEQIDLIDLLMQLWRGK. The helical transmembrane segment at 32–52 threads the bilayer; that stretch reads VTIIICIVVAIALAVGYLAVA. At 53–294 the chain is on the periplasmic side; the sequence is KEKWTSIAIV…LPIRRDSPKK (242 aa). Residues 295–315 form a helical membrane-spanning segment; sequence AITLVLAVLIGGMIGAGVVLG. Topologically, residues 316 to 327 are cytoplasmic; sequence RNALRGYKAKAE.

This sequence belongs to the WzzB/Cld/Rol family.

It localises to the cell inner membrane. Its pathway is bacterial outer membrane biogenesis; lipopolysaccharide biosynthesis. Its function is as follows. Confers a modal distribution of chain length on the O-antigen component of lipopolysaccharide (LPS). Gives rise to a reduced number of short chain molecules and increases in numbers of longer molecules, with a modal value of 13 (in strain O111/M92) and of 17 (in strain K12). This Escherichia coli O111:H- protein is Chain length determinant protein (wzzB).